Consider the following 1386-residue polypeptide: MTLDDLFSMRGTAAGQTNIRNLKAMQISIASPESIREWSYGEVKKPETINYRTFKPERDGLFCAKIFGPVKDYECNCGKYKRMKHRGIVCEKCGVEVIASKVRRERMGHIELAAPVAHIWFLKTLPSKIGTLLDMTMADLEKVLYFDSYIVLDPGSTSLAKLQVISEDQYLQIIDHYGEDALVVGMGAEAIRSLLEELNLEALRAELREESQSTRSQTKKKKLTKRLKIVEAFLESDNKPEWMVMEVVPVIPPELRPLVPLDGGRFATSDLNDLYRRVINRNNRLKRLMELGAPDIIIRNEKRMLQESVDALFDNGRRGRAITGTNGRPLKSLSDMIKGKQGRFRQNLLGKRVDYSGRSVIVVGPKLKLHQCGLPKKMALELFKPFIYSKLEERGLASTIKSAKKMVEREELVVWDILEEVVREYPILLNRAPTLHRLGIQAFEPLLVEGKAIQLHPLVCAAYNADFDGDQMAVHVPLSVEAQIECRVLMMSTNNILSPANGTPVIVPSQDIVLGLYYMTVERSFEKGEGMAFCAPWEVVAAYDAGSISLHARIKVRMPDGRLLNTTPGRIMVGEVLPEGVHFDLVNTVLTKKNIARLVGNAYRDAGTKATVLLCDRLKDIGYEFATRAGVTIGVKDMTIPQSKKGILADSQAEVDNIERQYRDGIITRTEKYNKVVDVWTKATQDISQEMIKEISYDVMRDEKTGKEELNQSFNPIFMMSNSGARGNQDQMRQLAGMRGLMAKPSGEIIETPITSCFREGLSVLQYFTSTHGARKGLADTALKTANSGYLTRRLVDVVQDVIISEHDCGTVDGLEVGHLIKGGDIKMRLAERVLGRVTLYPVTDPETTEVLFPANTLIDENVAKKLDEAGINSLHIRSALTCRSDRGVCAMCYGRDLARGHVVNIGETVGIIAAQSIGEPGTQLTMRTFHIGGTASREIERSNIQAQYTGRAVLYRVKSVRNKDGQHMVMGKSGQVGIVDEQGREREKYVLPSGAKLHVEEGQEVKKGQLLAEWDPFNEPFVSEVDGLVKFTDIIEGKTVQEKADEATQMTTQTIIEYRTTNFRPAVALCDADGVVKTRPESNIPASYSLPVGAILMVRDGQEITAGDIIARKPRESSKTKDIVGGLPRVAELFEVRKPKDMAVVSQIDGIVTFAGETKGKRKLVVTPETGDEKEYLVPKGKHITVTDGDFVEAGEMLTEGHPELHDILGVKGEKYLANYLVEEIQDVYRFQGVGIDDKHIEVIVRQMLKKVTVLDPGQTSFLVGEQVDKAEFRIENQKAIEEGRTPATAEPLVLGITQASLTTSSFISAASFQETTKVLTEASLRGKNDHLRGLKENVIVGRLIPAGTGYREYVHSDISVPEQKERPDRFLEELVGAPQPVVED.

Cys-75, Cys-77, Cys-90, and Cys-93 together coordinate Zn(2+). Positions 466, 468, and 470 each coordinate Mg(2+). Residues Cys-809, Cys-883, Cys-890, and Cys-893 each coordinate Zn(2+).

It belongs to the RNA polymerase beta' chain family. In terms of assembly, the RNAP catalytic core consists of 2 alpha, 1 beta, 1 beta' and 1 omega subunit. When a sigma factor is associated with the core the holoenzyme is formed, which can initiate transcription. It depends on Mg(2+) as a cofactor. Zn(2+) is required as a cofactor.

The catalysed reaction is RNA(n) + a ribonucleoside 5'-triphosphate = RNA(n+1) + diphosphate. Functionally, DNA-dependent RNA polymerase catalyzes the transcription of DNA into RNA using the four ribonucleoside triphosphates as substrates. This Oleidesulfovibrio alaskensis (strain ATCC BAA-1058 / DSM 17464 / G20) (Desulfovibrio alaskensis) protein is DNA-directed RNA polymerase subunit beta'.